A 70-amino-acid polypeptide reads, in one-letter code: Cold shock-like protein (70 aa).

One can recognise a CSD domain in the interval 5 to 65; the sequence is GTVKWFSKDK…DTKGPRAKNV (61 aa).

It is found in the cytoplasm. The polypeptide is Cold shock-like protein (csp) (Aquifex aeolicus (strain VF5)).